The sequence spans 108 residues: uncharacterized protein (108 aa).

This is an uncharacterized protein from Enterobacteria phage T4 (Bacteriophage T4).